Here is a 69-residue protein sequence, read N- to C-terminus: Large ribosomal subunit protein uL29 (69 aa).

This sequence belongs to the universal ribosomal protein uL29 family.

The sequence is that of Large ribosomal subunit protein uL29 from Treponema denticola (strain ATCC 35405 / DSM 14222 / CIP 103919 / JCM 8153 / KCTC 15104).